Consider the following 319-residue polypeptide: 3'-5' exoribonuclease YhaM (319 aa).

A DNA-binding region (OB) is located at residues 12–90; it reads EAVDGYLLIK…QLKIASIRPT (79 aa). The HD domain maps to 163-279; that stretch reads HVVSMLRIGK…LHLIDNIDAK (117 aa).

Belongs to the YhaM family.

Its function is as follows. Shows a 3'-5' exoribonuclease activity. This Shouchella clausii (strain KSM-K16) (Alkalihalobacillus clausii) protein is 3'-5' exoribonuclease YhaM.